Consider the following 366-residue polypeptide: Ribosomal RNA large subunit methyltransferase M (366 aa).

Residues Ser-188, Cys-221–Gly-224, Asp-240, Asp-260, and Asp-277 contribute to the S-adenosyl-L-methionine site. The Proton acceptor role is filled by Lys-306.

The protein belongs to the class I-like SAM-binding methyltransferase superfamily. RNA methyltransferase RlmE family. RlmM subfamily. In terms of assembly, monomer.

The protein resides in the cytoplasm. It carries out the reaction cytidine(2498) in 23S rRNA + S-adenosyl-L-methionine = 2'-O-methylcytidine(2498) in 23S rRNA + S-adenosyl-L-homocysteine + H(+). In terms of biological role, catalyzes the 2'-O-methylation at nucleotide C2498 in 23S rRNA. The chain is Ribosomal RNA large subunit methyltransferase M from Sodalis glossinidius (strain morsitans).